A 325-amino-acid polypeptide reads, in one-letter code: Beta-1,3-galactosyltransferase brn (325 aa).

Topologically, residues 1–7 are cytoplasmic; the sequence is MQSKHRK. Residues 8–28 form a helical; Signal-anchor for type II membrane protein membrane-spanning segment; it reads LLLRCLLVLPLILLVDYCGLL. The Lumenal portion of the chain corresponds to 29–325; it reads THLHELNFER…WNECRSANYA (297 aa). Residues Asn-149 and Asn-166 are each glycosylated (N-linked (GlcNAc...) asparagine).

The protein belongs to the glycosyltransferase 31 family.

It localises to the golgi apparatus membrane. The enzyme catalyses a ganglioside GM2 (d18:1(4E)) + UDP-alpha-D-galactose = a ganglioside GM1 (d18:1(4E)) + UDP + H(+). Its function is as follows. Neurogenic protein essential for the development and maintenance of epithelial structure. Required in the germline for establishing the follicular epithelium and for determining the dorsal-ventral polarity. Collaborates with Notch on the apical surface of follicle cells to mediate germline-follicle cell adhesion. Brn has a role in chorion formation. The chain is Beta-1,3-galactosyltransferase brn (brn) from Drosophila melanogaster (Fruit fly).